The following is a 171-amino-acid chain: UPF0316 protein Exig_2248 (171 aa).

The next 3 membrane-spanning stretches (helical) occupy residues 4–24 (ILLI…RTIM), 31–51 (IIAG…LGIV), and 57–77 (TVGM…GGFV).

Belongs to the UPF0316 family.

The protein resides in the cell membrane. This is UPF0316 protein Exig_2248 from Exiguobacterium sibiricum (strain DSM 17290 / CCUG 55495 / CIP 109462 / JCM 13490 / 255-15).